The sequence spans 218 residues: Imidazole glycerol phosphate synthase subunit HisH (218 aa).

A Glutamine amidotransferase type-1 domain is found at 12-218 (SIVVVDYGLG…RNFVDYCADQ (207 aa)). The Nucleophile role is filled by Cys88. Active-site residues include His196 and Glu198.

As to quaternary structure, heterodimer of HisH and HisF.

Its subcellular location is the cytoplasm. It catalyses the reaction 5-[(5-phospho-1-deoxy-D-ribulos-1-ylimino)methylamino]-1-(5-phospho-beta-D-ribosyl)imidazole-4-carboxamide + L-glutamine = D-erythro-1-(imidazol-4-yl)glycerol 3-phosphate + 5-amino-1-(5-phospho-beta-D-ribosyl)imidazole-4-carboxamide + L-glutamate + H(+). The catalysed reaction is L-glutamine + H2O = L-glutamate + NH4(+). It participates in amino-acid biosynthesis; L-histidine biosynthesis; L-histidine from 5-phospho-alpha-D-ribose 1-diphosphate: step 5/9. Functionally, IGPS catalyzes the conversion of PRFAR and glutamine to IGP, AICAR and glutamate. The HisH subunit catalyzes the hydrolysis of glutamine to glutamate and ammonia as part of the synthesis of IGP and AICAR. The resulting ammonia molecule is channeled to the active site of HisF. This Halobacterium salinarum (strain ATCC 700922 / JCM 11081 / NRC-1) (Halobacterium halobium) protein is Imidazole glycerol phosphate synthase subunit HisH.